The sequence spans 146 residues: Hemoglobin subunit beta-2 (146 aa).

The Globin domain maps to E2–H146. Heme b contacts are provided by H63 and H92.

This sequence belongs to the globin family. As to quaternary structure, hb 2 is a heterotetramer of two alpha-2 and two beta-2 chains. Red blood cells.

Involved in oxygen transport from gills to the various peripheral tissues. In Gobionotothen gibberifrons (Humped rockcod), this protein is Hemoglobin subunit beta-2 (hbb2).